The sequence spans 107 residues: MAFVVTDNCIKCKYTDCVEVCPVDCFYEGPNFLVIHPDECIDCALCEPECPAQAIFSEDEVPEDMQEFIQLNAELAEVWPNITEKKDPLPDAEDWDGVKGKLQHLER.

2 consecutive 4Fe-4S ferredoxin-type domains span residues 2-30 (AFVVTDNCIKCKYTDCVEVCPVDCFYEGP) and 31-60 (NFLVIHPDECIDCALCEPECPAQAIFSEDE). Positions 9 and 17 each coordinate [3Fe-4S] cluster. Residues Cys-21, Cys-40, Cys-43, and Cys-46 each coordinate [4Fe-4S] cluster. Position 50 (Cys-50) interacts with [3Fe-4S] cluster. Residues 84-107 (EKKDPLPDAEDWDGVKGKLQHLER) form a disordered region. The span at 96–107 (DGVKGKLQHLER) shows a compositional bias: basic and acidic residues.

[4Fe-4S] cluster is required as a cofactor. Requires [3Fe-4S] cluster as cofactor.

Its function is as follows. Ferredoxins are iron-sulfur proteins that transfer electrons in a wide variety of metabolic reactions. This ferredoxin could play a role in regulating gene expression by interacting directly with DNA. The sequence is that of Ferredoxin-1 (fdxA) from Azotobacter vinelandii.